The following is a 391-amino-acid chain: Elongation factor Tu (391 aa).

The tr-type G domain maps to 10–201 (KPHVNIGTIG…AVDEFIPTPE (192 aa)). Residues 19–26 (GHVDHGKT) form a G1 region. 19-26 (GHVDHGKT) contributes to the GTP binding site. Thr26 serves as a coordination point for Mg(2+). Residues 55–59 (GITIS) form a G2 region. Positions 76-79 (DCPG) are G3. Residues 76–80 (DCPGH) and 131–134 (NKVD) contribute to the GTP site. The G4 stretch occupies residues 131-134 (NKVD). Residues 169-171 (SAL) form a G5 region.

The protein belongs to the TRAFAC class translation factor GTPase superfamily. Classic translation factor GTPase family. EF-Tu/EF-1A subfamily. As to quaternary structure, monomer.

The protein localises to the cytoplasm. The catalysed reaction is GTP + H2O = GDP + phosphate + H(+). Its function is as follows. GTP hydrolase that promotes the GTP-dependent binding of aminoacyl-tRNA to the A-site of ribosomes during protein biosynthesis. In Roseobacter denitrificans (strain ATCC 33942 / OCh 114) (Erythrobacter sp. (strain OCh 114)), this protein is Elongation factor Tu.